Consider the following 363-residue polypeptide: UDP-3-O-acylglucosamine N-acyltransferase (363 aa).

H237 serves as the catalytic Proton acceptor. Residues 338-363 (EQNSTDRAPNAKMLEVGVDPETTCSS) are disordered.

The protein belongs to the transferase hexapeptide repeat family. LpxD subfamily. Homotrimer.

The enzyme catalyses a UDP-3-O-[(3R)-3-hydroxyacyl]-alpha-D-glucosamine + a (3R)-hydroxyacyl-[ACP] = a UDP-2-N,3-O-bis[(3R)-3-hydroxyacyl]-alpha-D-glucosamine + holo-[ACP] + H(+). It participates in bacterial outer membrane biogenesis; LPS lipid A biosynthesis. Catalyzes the N-acylation of UDP-3-O-acylglucosamine using 3-hydroxyacyl-ACP as the acyl donor. Is involved in the biosynthesis of lipid A, a phosphorylated glycolipid that anchors the lipopolysaccharide to the outer membrane of the cell. This is UDP-3-O-acylglucosamine N-acyltransferase from Synechococcus sp. (strain JA-2-3B'a(2-13)) (Cyanobacteria bacterium Yellowstone B-Prime).